A 306-amino-acid polypeptide reads, in one-letter code: Putative B3 domain-containing protein Os03g0621600 (306 aa).

The segment at residues 29–122 (FSVLCLMPIM…QLKTLIFDSS (94 aa)) is a DNA-binding region (TF-B3 1). Residues 139 to 166 (YDIAMRNSQDEKKKRKQRDISRQGTVKP) form a disordered region. Positions 210–306 (GYVMNNSSIH…VMDVHIIRRK (97 aa)) form a DNA-binding region, TF-B3 2.

It localises to the nucleus. The chain is Putative B3 domain-containing protein Os03g0621600 from Oryza sativa subsp. japonica (Rice).